We begin with the raw amino-acid sequence, 205 residues long: ATP phosphoribosyltransferase (205 aa).

This sequence belongs to the ATP phosphoribosyltransferase family. Short subfamily. As to quaternary structure, heteromultimer composed of HisG and HisZ subunits.

The protein resides in the cytoplasm. It catalyses the reaction 1-(5-phospho-beta-D-ribosyl)-ATP + diphosphate = 5-phospho-alpha-D-ribose 1-diphosphate + ATP. It participates in amino-acid biosynthesis; L-histidine biosynthesis; L-histidine from 5-phospho-alpha-D-ribose 1-diphosphate: step 1/9. Functionally, catalyzes the condensation of ATP and 5-phosphoribose 1-diphosphate to form N'-(5'-phosphoribosyl)-ATP (PR-ATP). Has a crucial role in the pathway because the rate of histidine biosynthesis seems to be controlled primarily by regulation of HisG enzymatic activity. The polypeptide is ATP phosphoribosyltransferase (Nitratiruptor sp. (strain SB155-2)).